A 125-amino-acid polypeptide reads, in one-letter code: Morphine 6-dehydrogenase (125 aa).

Residues 9–18 (GHSIPVLGFI) and 74–111 (SALGSSRDPWKQSPALIALRYQLQRGVVVLAKSFIERE) contribute to the NADP(+) site.

Belongs to the aldo/keto reductase family. In terms of assembly, monomer. The N-terminus is blocked.

It localises to the cytoplasm. It carries out the reaction morphine + NAD(+) = morphinone + NADH + H(+). It catalyses the reaction morphine + NADP(+) = morphinone + NADPH + H(+). With respect to regulation, strongly inhibited by sulfhydryl reagents and quercetin, but not by pyrazole, barbital and indomethacine. Its function is as follows. Catalyzes the dehydrogenation of morphine to morphinone. Uses both NAD and NADP, but the activity is much greater with NAD than with NADP. In Oryctolagus cuniculus (Rabbit), this protein is Morphine 6-dehydrogenase.